Here is a 324-residue protein sequence, read N- to C-terminus: Archaeosine synthase subunit beta (324 aa).

Positions 12–254 (GKPGTALFII…LIWAKRKFPN (243 aa)) constitute a Radical SAM core domain. Residues Cys27, Cys36, and Cys39 each coordinate [4Fe-4S] cluster.

The protein belongs to the radical SAM superfamily. RaSEA family. As to quaternary structure, forms a robust complex with the archaeosine synthase alpha subunit ArcS, likely an alpha(2)beta(2) heterotetrameric structure. The cofactor is [4Fe-4S] cluster.

The catalysed reaction is 7-N-[(5S)-5-amino-5-carboxypentyl]formamidino-7-deazaguanosine(15) in tRNA + S-adenosyl-L-methionine = archaeosine(15) in tRNA + L-1-piperideine-6-carboxylate + 5'-deoxyadenosine + L-methionine + 2 H(+). It participates in tRNA modification; archaeosine-tRNA biosynthesis. Its function is as follows. Radical SAM enzyme involved in the synthesis of archaeosine, a modified nucleoside present in the dihydrouridine loop (D-loop) of archaeal tRNAs. Catalyzes the cleavage of the C(epsilon)-N bond of the lysine moiety of q0kN15-tRNA, leading to the formation of archaeosine at position 15 in tRNAs. This Thermococcus kodakarensis (strain ATCC BAA-918 / JCM 12380 / KOD1) (Pyrococcus kodakaraensis (strain KOD1)) protein is Archaeosine synthase subunit beta.